Reading from the N-terminus, the 136-residue chain is Holo-[acyl-carrier-protein] synthase (136 aa).

2 residues coordinate Mg(2+): Asp-8 and Glu-57.

It belongs to the P-Pant transferase superfamily. AcpS family. Mg(2+) is required as a cofactor.

The protein resides in the cytoplasm. The enzyme catalyses apo-[ACP] + CoA = holo-[ACP] + adenosine 3',5'-bisphosphate + H(+). Transfers the 4'-phosphopantetheine moiety from coenzyme A to a Ser of acyl-carrier-protein. The chain is Holo-[acyl-carrier-protein] synthase from Methylorubrum extorquens (strain CM4 / NCIMB 13688) (Methylobacterium extorquens).